We begin with the raw amino-acid sequence, 313 residues long: MNTFSQVWVFSDTPSRLPELMNGAQALANQINTFVLNDADGAQAIQLGANHVWKLSGKPDERMIEDYAGVMADTIRQHGADGLVLLPNTRRGKLLAAKLGYRLKAAVSNDASTVSVQDGKATVKHMVYGGLAIGEERIATPYAVLTISSGTFDAAQPDASRTGETHTVEWQAPAVAITRTATQARQSNSVDLDKARLVVSVGRGIGSKENIALAEQLCKAIGAELACSRPVAENEKWMEHERYVGISNLMLKPELYLAVGISGQIQHMVGANASQTIFAINKDKNAPIFQYADYGIVGDAVKILPALTAALAR.

FAD is bound at residue 255-283; the sequence is LYLAVGISGQIQHMVGANASQTIFAINKD.

This sequence belongs to the ETF alpha-subunit/FixB family. In terms of assembly, heterodimer of FixA and FixB.

The protein operates within amine and polyamine metabolism; carnitine metabolism. In terms of biological role, required for anaerobic carnitine reduction. May bring reductant to CaiA. This is Protein FixB from Escherichia coli (strain SMS-3-5 / SECEC).